The following is a 522-amino-acid chain: Tubulin-specific chaperone E (522 aa).

In terms of domain architecture, CAP-Gly spans 27-71; the sequence is GNVPPTPGLWLGVEWDNHLRGKHNGTHEGTKYFTCSHPTGGSFIR. LRR repeat units lie at residues 149–170, 175–196, 201–222, 226–248, 249–270, 274–295, and 303–324; these read NIMT…AHIS, NLTS…SSLA, NLKV…QCAS, ALEE…NNLQ, NLTI…HTIA, RLKQ…DVDF, and SLTS…NELH. One can recognise an LRRCT domain in the interval 337-379; the sequence is NPLMDLDKNPETVRQLIIAKIENLKFLNKTEIFPTERRGAELD.

It belongs to the TBCE family. As to quaternary structure, supercomplex made of cofactors A to E. Cofactors A and D function by capturing and stabilizing tubulin in a quasi-native conformation. Cofactor E binds to the cofactor D-tubulin complex; interaction with cofactor C then causes the release of tubulin polypeptides that are committed to the native state.

It is found in the cytoplasm. The protein localises to the cytoskeleton. Functionally, tubulin-folding protein; involved in the second step of the tubulin folding pathway. This is Tubulin-specific chaperone E (tbce) from Xenopus laevis (African clawed frog).